The following is a 210-amino-acid chain: Large ribosomal subunit protein uL4 (210 aa).

Residues 44-54 are compositionally biased toward polar residues; it reads QRQGTASTLTR. The disordered stretch occupies residues 44–96; it reads QRQGTASTLTRSEVRGGGRKPYKQKGTGRARQGSIRTPLRPGGGVIFGPKPRS. The span at 60 to 71 shows a compositional bias: basic residues; sequence GGRKPYKQKGTG.

The protein belongs to the universal ribosomal protein uL4 family. In terms of assembly, part of the 50S ribosomal subunit.

In terms of biological role, one of the primary rRNA binding proteins, this protein initially binds near the 5'-end of the 23S rRNA. It is important during the early stages of 50S assembly. It makes multiple contacts with different domains of the 23S rRNA in the assembled 50S subunit and ribosome. Functionally, forms part of the polypeptide exit tunnel. The sequence is that of Large ribosomal subunit protein uL4 from Prochlorococcus marinus (strain MIT 9515).